We begin with the raw amino-acid sequence, 411 residues long: Protrudin (411 aa).

The interval 1-27 (MQTSEREGSGPELSPSVMPEAPLESPP) is disordered. At 1-66 (MQTSEREGSG…AGDGVRYLLR (66 aa)) the chain is on the cytoplasmic side. The segment at 1 to 92 (MQTSEREGSG…LFLTLNEGAW (92 aa)) is sufficient for homooligomerization. The sufficient for localization to endoplasmic reticulum tubular network and for interactions with REEP1, REEP5, ATL1, ATL2, ATL3 and SPAST stretch occupies residues 1–205 (MQTSEREGSG…LYLLPLCWVL (205 aa)). A necessary for interaction with RAB11A and function in neurite outgrowth region spans residues 51 to 64 (LEPLKDAGDGVRYL). The chain crosses the membrane as a helical span at residues 67–87 (WQMPLCSLLTCLGLNVLFLTL). Position 88 (N88) is a topological domain, lumenal. The helical transmembrane segment at 89 to 109 (EGAWYSVGALMISVPALLGYL) threads the bilayer. At 110–187 (QEVCRARLPE…NPVVSSQFYG (78 aa)) the chain is on the cytoplasmic side. The helical intramembrane region spans 188 to 208 (ALLGTICMLYLLPLCWVLTLL). At 209–411 (NSTLFLGNVE…CASCNQTLSK (203 aa)) the chain is on the cytoplasmic side. The tract at residues 234 to 286 (MNPKQEEHAFESPPPPDVGGKGGLMDSTPALTPTEDLTPGSVEEAEEAEPDEE) is disordered. The necessary for interaction with KIF5A stretch occupies residues 271-361 (TPGSVEEAEE…GCSATFSVLK (91 aa)). A compositionally biased stretch (acidic residues) spans 276–286 (EEAEEAEPDEE). The segment at 286–292 (EFKDAIE) is necessary for interaction with VAPA. The FYVE-type zinc finger occupies 344–410 (TNNFGNCTGC…VCASCNQTLS (67 aa)). Zn(2+) contacts are provided by C350, C353, C366, C369, C374, C377, C402, and C405.

Can form homooligomers (monomers, dimers and tetramers). Interacts with RAB11A (GDP-bound form); regulates RAB11A. Interacts with FKBP8; may negatively regulate ZFYVE27 phosphorylation. Interacts with VAPA (via MSP domain); may regulate ZFYVE27 retention in the endoplasmic reticulum and its function in cell projections formation. Interacts with VAPB (via MSP domain). Interacts with RAB11B (GDP-bound form), REEP1, REEP5, ATL1, ATL2, ATL3, SPAST, SURF4, KIF5A, KIF5B, KIF5C and RTN3. Phosphorylated. Phosphorylation is induced by NGF through the MAPK/ERK pathway and modulates interaction with RAB11A.

The protein resides in the recycling endosome membrane. Its subcellular location is the endoplasmic reticulum membrane. The protein localises to the cell projection. It is found in the growth cone membrane. Functionally, key regulator of RAB11-dependent vesicular trafficking during neurite extension through polarized membrane transport. Promotes axonal elongation and contributes to the establishment of neuronal cell polarity. Involved in nerve growth factor-induced neurite formation in VAPA-dependent manner. Contributes to both the formation and stabilization of the tubular ER network. Involved in ER morphogenesis by regulating the sheet-to-tubule balance and possibly the density of tubule interconnections. Acts as an adapter protein that facilitates the interaction of KIF5A with VAPA, VAPB, SURF4, RAB11A, RAB11B and RTN3 and the ZFYVE27-KIF5A complex contributes to the transport of these proteins in neurons. Can induce formation of neurite-like membrane protrusions in non-neuronal cells in a KIF5A/B-dependent manner. In Pongo abelii (Sumatran orangutan), this protein is Protrudin (ZFYVE27).